Here is a 250-residue protein sequence, read N- to C-terminus: Tryptophan synthase alpha chain (250 aa).

Residues Glu31 and Asp42 each act as proton acceptor in the active site.

Belongs to the TrpA family. As to quaternary structure, tetramer of two alpha and two beta chains.

It carries out the reaction (1S,2R)-1-C-(indol-3-yl)glycerol 3-phosphate + L-serine = D-glyceraldehyde 3-phosphate + L-tryptophan + H2O. Its pathway is amino-acid biosynthesis; L-tryptophan biosynthesis; L-tryptophan from chorismate: step 5/5. Functionally, the alpha subunit is responsible for the aldol cleavage of indoleglycerol phosphate to indole and glyceraldehyde 3-phosphate. The chain is Tryptophan synthase alpha chain from Staphylococcus carnosus (strain TM300).